The following is a 1762-amino-acid chain: MSVLISQSVINYVEEENIPALKALLEKCKDVDERNECGQTPLMLAAEQGNVEIVKELLKNGANCNLEDLDNWTALISASKEGHIHIVEELLKSGASLEHRDMGGWTALMWACYKGRTDVVELLLSHGANPSVTGLYSVYPIIWAAGRGHADIVHLLLQNGAKVNCSDKYGTTPLVWAARKGHLECVKHLLAMGADVDQEGANSMTALIVAVKGGYTQSVKEILKRNPNVNLTDKDGNTALMIASKEGHIEIVQDLLDAGTYVNIPDRSGDTVLIGAVRGGHVEIVRALLQKYADIDIRGQDNKTALYWAVEKGNATMVRDILQCNPDTEICTKDGETPLIKATKMRNIEVVELLLDKGAKVSAVDKKGDTPLHVAIRGRSRRLAELLLRNPKDGRLLYRPNKAGETPYNIDCSHQKSILTQIFGARHLSPTETDGDMLGYDLYSSALADILSEPTMQPPICVGLYAQWGSGKSFLLKKLEDEMKTFAGQQTEPLFQFSWLIVFLTLLLCGGLGLVFAFTVDTNLAIAISLSFLALIYIFFIVIYFGGRREGESWNWAWALSTRLARHIGYLELLFKLMFVNPPELPEQTTKALPVRFLFTDYNRLSSVGGETSLAEMIATLSDACEREFGFLATRLFRVFRTEESQGKKKWKKTCCLPSFVIFLFIVGCIIAGITLLAIFRVDPKHLTVNAILISIASVVGLAFVLNCRTWWQVLDSLLNSQRKRLHSAASKLHKLKSEGFMKVLKCEVELMARMAKTIDSFTQNQTRLVVIIDGLDACEQDKVLQMLDTVRVLFSKGPFIAIFASDPHIIIKAINQNLNSVLRDSNINGHDYMRNIVHLPVFLNSRGLSNARKFLVTSATNGDITCSDTTGTQEDTDRRVSQNSLGEMTKLGSKTALNRRDTYRRRQMQRTITRQMSFDLTKLLVTEDWFSDISPQTMRRLLNIVSVTGRLLRANQITFNWDRLASWINLTEQWPYRTSWLILYLEETEGLPDQMTLKTIYERISKNIPTTKDVEPLLEIDGDIRNFEVFLSSRTPVLVARDVKTFLPCTVNLDPKLREIIADVRAAREQINIGGLAYPPLPLHEGPPRPPSGYSQPASVCSSASFNGPFPGGVVSPQPHSSYYSGLSGPQHPFYNRPFFAPYLYTPRYYPGGSQHLISRSSVKTSLPRDQNNGLPCDSGFNKQRQAAVPATGSSLLLSSMTVDVVCEKLRQIEGLDQSMMPQYCTTIKKANINGRVLSQCNIDELKKEMAMNFGDWHLFRSMVLEMRSVESQVVPEDPRFLNENSSAPVPHGESARRSSHTELPLTELSSQTPYTLNFSFEELNTLGLDEGAPRHSNLSWQSQTRRTPSLSSLNSQDSSIEISKLTDKVQAEYRDAYREYIAQMSQLEGGTGSSTISGRSSPHSTYYIGQSSSGGSIHSTLEQERGKEGELKQEDGRKSFLMKRGDVIDYSSSGVSTNEASPLDPITEEDEKSDQSGSKLLPGKKSSERPSLFQTDLKLKGGGLRYQKLPSDEDESGTEESDNTPLLKDDKDKKAEGKAERVCKSPEHSAEPIRTFIKAKEYLSDALLDKKDSSDSGVRSNESSPNHSLHNEAADDSQLEKANLIELEDEGHSGKRGMPHSLSGLQDPIIARMSICSEDKKSPSECSLIASSPEESWPACQKAYNLNRTPSTVTLNNNTAPTNRANQNFDEIEGIRETSQVILRPGPSPNPTAVQNENLKSMAHKRSQRSSYTRLSKDASELHAASSESTGFGEERESIL.

Over Met1 to Leu508 the chain is Cytoplasmic. ANK repeat units lie at residues Ala45–Ala74, Ala78–Ala107, Ala111–Pro140, Ala145–Leu174, Ala178–Leu207, Val211–Leu240, Ser244–Leu273, Val277–Leu306, Val310–Leu339, Thr343–Leu372, and Ile376–Glu405. The region spanning Tyr440 to Leu953 is the KAP NTPase domain. Residues Cys509–Ser529 form a helical membrane-spanning segment. Over Leu530 to Leu533 the chain is Extracellular. The helical transmembrane segment at Ala534–Trp554 threads the bilayer. The Cytoplasmic segment spans residues Asn555–Gly668. Residues Cys669–Val689 traverse the membrane as a helical segment. Over Asn690–Ile696 the chain is Extracellular. The chain crosses the membrane as a helical span at residues Ala697–Ser717. Over Leu718 to Asn1680 the chain is Cytoplasmic. Ser882 and Ser885 each carry phosphoserine. Phosphothreonine is present on Thr914. Ser918 bears the Phosphoserine; by PKD mark. Residues Pro1089–Pro1092 form a mediates interaction with CRKL region. Residues Ser1163, Ser1288, Ser1344, Ser1351, Ser1353, Ser1354, and Ser1357 each carry the phosphoserine modification. Disordered regions lie at residues Asp1279–Leu1305, Arg1336–Gln1358, Glu1390–Lys1440, and Tyr1452–Arg1556. Positions Ser1338–Pro1350 are enriched in polar residues. Low complexity predominate over residues Ser1395 to Thr1422. Over residues Leu1423–Lys1440 the composition is skewed to basic and acidic residues. Over residues Tyr1452 to Ala1462 the composition is skewed to polar residues. Residues Ser1513, Ser1518, Ser1547, and Ser1566 each carry the phosphoserine modification. Positions Asp1514 to Asp1524 are enriched in acidic residues. Basic and acidic residues predominate over residues Leu1529–Glu1553. The tract at residues Asp1571–Gln1628 is disordered. Polar residues predominate over residues Gly1579–Ser1590. 2 positions are modified to phosphoserine: Ser1615 and Ser1625. Position 1671 is a phosphothreonine (Thr1671). Ser1673 is subject to Phosphoserine. Thr1676 bears the Phosphothreonine mark. The tract at residues Ile1704–Leu1762 is disordered. The PDZ-binding signature appears at Glu1757–Leu1762.

Found in a complex, at least composed of KIDINS220, MAGI2, NTRK1 and RAPGEF2; the complex is mainly formed at late endosomes in a nerve growth factor (NGF)-dependent manner. Interacts with RAPGEF2; the interaction is strengthened after NGF stimulation. Isoform 2 interacts (via C-terminal domain) with MAGI2 isoform 1 (via PDZ domain). Interacts with NTRK1, NTRK2, NTRK3, ERKL and NGFR. Can form a ternary complex with NGFR and NTRK1 and this complex is affected by the expression levels of KIDINS220/ARMS. An increase in KIDINS220/ARMS expression leads to a decreased association of NGFR and NTRK1. Interacts (via PDZ-binding motif) with SNTA1 and SNTB2 (via PDZ domains). Interacts with EPHA4 and PRKD1. Tyrosine phosphorylated by NTRK1, NTRK2, EPHB2 and EPHA4. Phosphorylation at Ser-918 is induced by phorbol ester treatment. Phosphorylation by NTRK2 is induced by brain-derived neurotrophic factor (BDNF) and neurotrophin-4/5. Phosphorylation by NTRK1 is induced by nerve growth factor (NGF). Expressed in developing nervous system and in highly plastic areas of the adult brain. Also expressed in neuroendocrine cells, where it concentrates at the tip of neurites. Expressed in developing muscle and is concentrated at the neuromuscular junction (NMS). SNTA1 can regulate its localization in the NMS.

It localises to the membrane. The protein localises to the late endosome. Its function is as follows. Promotes a prolonged MAP-kinase signaling by neurotrophins through activation of a Rap1-dependent mechanism. Provides a docking site for the CRKL-C3G complex, resulting in Rap1-dependent sustained ERK activation. May play an important role in regulating postsynaptic signal transduction through the syntrophin-mediated localization of receptor tyrosine kinases such as EPHA4. In cooperation with SNTA1 can enhance EPHA4-induced JAK/STAT activation. Plays a role in nerve growth factor (NGF)-induced recruitment of RAPGEF2 to late endosomes and neurite outgrowth. May play a role in neurotrophin- and ephrin-mediated neuronal outgrowth and in axon guidance during neural development and in neuronal regeneration. The chain is Kinase D-interacting substrate of 220 kDa (Kidins220) from Rattus norvegicus (Rat).